An 857-amino-acid polypeptide reads, in one-letter code: uncharacterized protein (857 aa).

4 disordered regions span residues 316–339, 484–561, 619–777, and 809–836; these read PPAP…TKEN, AKQP…PRTN, GQFP…PKPQ, and EQRP…STGK. 3 stretches are compositionally biased toward basic and acidic residues: residues 324-339, 518-534, and 630-640; these read PENK…TKEN, KKTE…KAEE, and QRAESSIDKDC. Residues 683–700 are compositionally biased toward polar residues; sequence RTTTVQPHSHSAQPTTLR. Residues 708–725 are compositionally biased toward low complexity; it reads SSSLIASAKPAPPISSSS. A compositionally biased stretch (polar residues) spans 726–738; the sequence is TGPNVTNPNQSSA. A compositionally biased stretch (basic and acidic residues) spans 809 to 828; the sequence is EQRPEREAMKRQAQQERENA.

This is an uncharacterized protein from Mus musculus (Mouse).